A 147-amino-acid chain; its full sequence is Nucleoside diphosphate kinase (147 aa).

ATP contacts are provided by Lys9, Phe57, Arg85, Thr91, Arg102, and Asn112. His115 serves as the catalytic Pros-phosphohistidine intermediate.

This sequence belongs to the NDK family. Homotetramer. Requires Mg(2+) as cofactor.

The protein localises to the cytoplasm. It carries out the reaction a 2'-deoxyribonucleoside 5'-diphosphate + ATP = a 2'-deoxyribonucleoside 5'-triphosphate + ADP. The catalysed reaction is a ribonucleoside 5'-diphosphate + ATP = a ribonucleoside 5'-triphosphate + ADP. In terms of biological role, major role in the synthesis of nucleoside triphosphates other than ATP. The ATP gamma phosphate is transferred to the NDP beta phosphate via a ping-pong mechanism, using a phosphorylated active-site intermediate. The protein is Nucleoside diphosphate kinase of Thermosipho africanus (strain TCF52B).